We begin with the raw amino-acid sequence, 375 residues long: Chaperone protein DnaJ (375 aa).

Residues Asp5 to Gly70 form the J domain. Residues Gly134–Tyr212 form a CR-type zinc finger. Zn(2+) is bound by residues Cys147, Cys150, Cys164, Cys167, Cys186, Cys189, Cys200, and Cys203. CXXCXGXG motif repeat units lie at residues Cys147–Gly154, Cys164–Gly171, Cys186–Gly193, and Cys200–Gly207.

It belongs to the DnaJ family. As to quaternary structure, homodimer. The cofactor is Zn(2+).

Its subcellular location is the cytoplasm. In terms of biological role, participates actively in the response to hyperosmotic and heat shock by preventing the aggregation of stress-denatured proteins and by disaggregating proteins, also in an autonomous, DnaK-independent fashion. Unfolded proteins bind initially to DnaJ; upon interaction with the DnaJ-bound protein, DnaK hydrolyzes its bound ATP, resulting in the formation of a stable complex. GrpE releases ADP from DnaK; ATP binding to DnaK triggers the release of the substrate protein, thus completing the reaction cycle. Several rounds of ATP-dependent interactions between DnaJ, DnaK and GrpE are required for fully efficient folding. Also involved, together with DnaK and GrpE, in the DNA replication of plasmids through activation of initiation proteins. The chain is Chaperone protein DnaJ from Pseudomonas putida (strain ATCC 47054 / DSM 6125 / CFBP 8728 / NCIMB 11950 / KT2440).